A 332-amino-acid chain; its full sequence is 2,3-diketo-L-gulonate reductase (332 aa).

The Proton donor role is filled by His44. Residues 168–174 (ITMVDMS), 224–225 (WK), and 304–306 (GHE) contribute to the NAD(+) site.

It belongs to the LDH2/MDH2 oxidoreductase family. DlgD subfamily. As to quaternary structure, homodimer.

The protein localises to the cytoplasm. It carries out the reaction 3-dehydro-L-gulonate + NAD(+) = 2,3-dioxo-L-gulonate + NADH + H(+). The enzyme catalyses 3-dehydro-L-gulonate + NADP(+) = 2,3-dioxo-L-gulonate + NADPH + H(+). Catalyzes the reduction of 2,3-diketo-L-gulonate in the presence of NADH, to form 3-keto-L-gulonate. The sequence is that of 2,3-diketo-L-gulonate reductase from Salmonella paratyphi A (strain ATCC 9150 / SARB42).